A 467-amino-acid polypeptide reads, in one-letter code: Uronate isomerase (467 aa).

This sequence belongs to the metallo-dependent hydrolases superfamily. Uronate isomerase family.

It carries out the reaction D-glucuronate = D-fructuronate. The enzyme catalyses aldehydo-D-galacturonate = keto-D-tagaturonate. It functions in the pathway carbohydrate metabolism; pentose and glucuronate interconversion. The protein is Uronate isomerase of Solibacter usitatus (strain Ellin6076).